Reading from the N-terminus, the 260-residue chain is Proteasome subunit alpha (260 aa).

Belongs to the peptidase T1A family. In terms of assembly, the 20S proteasome core is composed of 14 alpha and 14 beta subunits that assemble into four stacked heptameric rings, resulting in a barrel-shaped structure. The two inner rings, each composed of seven catalytic beta subunits, are sandwiched by two outer rings, each composed of seven alpha subunits. The catalytic chamber with the active sites is on the inside of the barrel. Has a gated structure, the ends of the cylinder being occluded by the N-termini of the alpha-subunits. Is capped at one or both ends by the proteasome regulatory ATPase, PAN.

It localises to the cytoplasm. With respect to regulation, the formation of the proteasomal ATPase PAN-20S proteasome complex, via the docking of the C-termini of PAN into the intersubunit pockets in the alpha-rings, triggers opening of the gate for substrate entry. Interconversion between the open-gate and close-gate conformations leads to a dynamic regulation of the 20S proteasome proteolysis activity. Component of the proteasome core, a large protease complex with broad specificity involved in protein degradation. The protein is Proteasome subunit alpha of Thermococcus gammatolerans (strain DSM 15229 / JCM 11827 / EJ3).